Here is a 257-residue protein sequence, read N- to C-terminus: Hydroxyethylthiazole kinase (257 aa).

Residue Met49 coordinates substrate. Arg124 and Thr170 together coordinate ATP. Gly197 contacts substrate.

Belongs to the Thz kinase family. Mg(2+) is required as a cofactor.

It carries out the reaction 5-(2-hydroxyethyl)-4-methylthiazole + ATP = 4-methyl-5-(2-phosphooxyethyl)-thiazole + ADP + H(+). It functions in the pathway cofactor biosynthesis; thiamine diphosphate biosynthesis; 4-methyl-5-(2-phosphoethyl)-thiazole from 5-(2-hydroxyethyl)-4-methylthiazole: step 1/1. In terms of biological role, catalyzes the phosphorylation of the hydroxyl group of 4-methyl-5-beta-hydroxyethylthiazole (THZ). The polypeptide is Hydroxyethylthiazole kinase (Klebsiella pneumoniae subsp. pneumoniae (strain ATCC 700721 / MGH 78578)).